A 372-amino-acid chain; its full sequence is 2-aminoethylphosphonate--pyruvate transaminase 2 (372 aa).

Position 192 is an N6-(pyridoxal phosphate)lysine (Lys-192).

It belongs to the class-V pyridoxal-phosphate-dependent aminotransferase family. PhnW subfamily. As to quaternary structure, homodimer. The cofactor is pyridoxal 5'-phosphate.

The catalysed reaction is (2-aminoethyl)phosphonate + pyruvate = phosphonoacetaldehyde + L-alanine. Involved in phosphonate degradation. The chain is 2-aminoethylphosphonate--pyruvate transaminase 2 from Polaromonas sp. (strain JS666 / ATCC BAA-500).